The chain runs to 394 residues: Phosphoglycerate kinase (394 aa).

Substrate-binding positions include 21–23 (DFN), Arg36, 59–62 (HLGR), Arg118, and Arg151. At Ser183 the chain carries Phosphoserine. Lys201 and Gly292 together coordinate ATP. At Thr299 the chain carries Phosphothreonine. ATP contacts are provided by residues Glu323 and 350-353 (GGDS).

The protein belongs to the phosphoglycerate kinase family. In terms of assembly, monomer.

The protein localises to the cytoplasm. It catalyses the reaction (2R)-3-phosphoglycerate + ATP = (2R)-3-phospho-glyceroyl phosphate + ADP. It participates in carbohydrate degradation; glycolysis; pyruvate from D-glyceraldehyde 3-phosphate: step 2/5. The protein is Phosphoglycerate kinase of Bacillus cereus (strain G9842).